A 340-amino-acid chain; its full sequence is tRNA N6-adenosine threonylcarbamoyltransferase (340 aa).

The Fe cation site is built by His-115 and His-119. Residues 137-141, Asp-170, Gly-183, Asp-187, and Asn-276 each bind substrate; that span reads IVSGG. Asp-304 provides a ligand contact to Fe cation.

It belongs to the KAE1 / TsaD family. Fe(2+) is required as a cofactor.

The protein resides in the cytoplasm. It catalyses the reaction L-threonylcarbamoyladenylate + adenosine(37) in tRNA = N(6)-L-threonylcarbamoyladenosine(37) in tRNA + AMP + H(+). Required for the formation of a threonylcarbamoyl group on adenosine at position 37 (t(6)A37) in tRNAs that read codons beginning with adenine. Is involved in the transfer of the threonylcarbamoyl moiety of threonylcarbamoyl-AMP (TC-AMP) to the N6 group of A37, together with TsaE and TsaB. TsaD likely plays a direct catalytic role in this reaction. This is tRNA N6-adenosine threonylcarbamoyltransferase from Staphylococcus epidermidis (strain ATCC 35984 / DSM 28319 / BCRC 17069 / CCUG 31568 / BM 3577 / RP62A).